The sequence spans 407 residues: Phosphoglycerate kinase (407 aa).

Residues 24–26 (DFN), Arg40, 63–66 (HLGR), Arg121, and Arg154 each bind substrate. ATP-binding positions include Lys205, Glu337, and 363–366 (GGDS).

The protein belongs to the phosphoglycerate kinase family. As to quaternary structure, monomer.

The protein localises to the cytoplasm. It catalyses the reaction (2R)-3-phosphoglycerate + ATP = (2R)-3-phospho-glyceroyl phosphate + ADP. The protein operates within carbohydrate degradation; glycolysis; pyruvate from D-glyceraldehyde 3-phosphate: step 2/5. This is Phosphoglycerate kinase from Gloeobacter violaceus (strain ATCC 29082 / PCC 7421).